The primary structure comprises 247 residues: tRNA (guanine-N(7)-)-methyltransferase (247 aa).

Residues glycine 70, glutamate 93–isoleucine 94, asparagine 128–alanine 129, and leucine 148 contribute to the S-adenosyl-L-methionine site. Residue aspartate 151 is part of the active site. Serine 226–glutamate 228 is an S-adenosyl-L-methionine binding site.

It belongs to the class I-like SAM-binding methyltransferase superfamily. TrmB family.

It localises to the nucleus. It catalyses the reaction guanosine(46) in tRNA + S-adenosyl-L-methionine = N(7)-methylguanosine(46) in tRNA + S-adenosyl-L-homocysteine. It functions in the pathway tRNA modification; N(7)-methylguanine-tRNA biosynthesis. Functionally, catalyzes the formation of N(7)-methylguanine at position 46 (m7G46) in tRNA. This chain is tRNA (guanine-N(7)-)-methyltransferase, found in Drosophila pseudoobscura pseudoobscura (Fruit fly).